A 477-amino-acid chain; its full sequence is Proline--tRNA ligase (477 aa).

It belongs to the class-II aminoacyl-tRNA synthetase family. ProS type 3 subfamily. In terms of assembly, homodimer.

It localises to the cytoplasm. The enzyme catalyses tRNA(Pro) + L-proline + ATP = L-prolyl-tRNA(Pro) + AMP + diphosphate. Catalyzes the attachment of proline to tRNA(Pro) in a two-step reaction: proline is first activated by ATP to form Pro-AMP and then transferred to the acceptor end of tRNA(Pro). This chain is Proline--tRNA ligase, found in Methanoculleus marisnigri (strain ATCC 35101 / DSM 1498 / JR1).